The sequence spans 628 residues: MDTNTLPPKPSISPSIASSFPTVKPFSSQNSTTSNPELSHIEKESNASSIIISQQPLSPSNISSAAPLDETHIATKASASLRNNNVSPHIPSPSSFSSSSSSDLDKSMLDEKHPDSEDITAVSLSTPPFPESIDVARFSSEEKKILSRIRRKLDLRIITCLWITYFLSRSVTYSISLSLTMNKHQGHSLLQTVSGLNYHTLSVGTGLSYVSLIIFDLPSNLLMTRADPRLWLSRIQVTTGIIGACHAVLGTKGSSASGFIALRFFNGLAIAGMWPGFAFYTSRFYRDQHLGKRIGWYYTAAQISSVATSLLSAAFQKMDGLHGLYGYQWMFLIWGVVAFTQGLFLPRWLPCIKHNQHNEKWISWIRIPKFLGFLKASENTGLTPEEEEVHAIYMAEMQVGKSWTLTDLADAFLDVRLWPPIFMFFGVVGISNGLVNYSSLIISEINENFSSVTVSLLVAPIWVFDAIAILTVLPLHDRFHKKMLFFVGSCLFVLAGLLITTFVSNVWGRYVGLLILGFGLGPTVPIIMTWVSSAMGPSHGDVGVAAGLAIVSGLGNLGSVVATSALYSGWKADTTFRRSNETMCGMVGIAIVASIVMHMVQKFNIRRFPFKRIYACLSERRKKELSVT.

2 disordered regions span residues 1–65 and 80–125; these read MDTN…ISSA and SLRN…VSLS. The segment covering 12-21 has biased composition (low complexity); the sequence is ISPSIASSFP. Positions 25–37 are enriched in polar residues; it reads PFSSQNSTTSNPE. Low complexity-rich tracts occupy residues 48 to 64 and 87 to 102; these read SSII…NISS and SPHI…SSSS. Over residues 103 to 116 the composition is skewed to basic and acidic residues; it reads DLDKSMLDEKHPDS. 12 consecutive transmembrane segments (helical) span residues 157–177, 203–223, 230–250, 259–279, 294–314, 324–344, 417–437, 454–474, 483–503, 511–531, 542–562, and 583–603; these read IITC…SISL, VGTG…NLLM, LWLS…AVLG, FIAL…GFAF, IGWY…LSAA, LYGY…QGLF, LWPP…LVNY, VSLL…TVLP, MLFF…TTFV, VGLL…MTWV, VGVA…SVVA, and MCGM…VQKF.

This sequence belongs to the major facilitator superfamily. Allantoate permease family.

The protein resides in the membrane. This is an uncharacterized protein from Schizosaccharomyces pombe (strain 972 / ATCC 24843) (Fission yeast).